A 344-amino-acid polypeptide reads, in one-letter code: Fructose-bisphosphate aldolase (344 aa).

Position 53 (serine 53) interacts with D-glyceraldehyde 3-phosphate. Catalysis depends on aspartate 95, which acts as the Proton donor. Histidine 96, aspartate 131, glutamate 161, and histidine 212 together coordinate Zn(2+). Residue glycine 213 participates in dihydroxyacetone phosphate binding. Histidine 252 contributes to the Zn(2+) binding site. Dihydroxyacetone phosphate contacts are provided by residues 253-255 (GGS) and 274-277 (NVDT).

Belongs to the class II fructose-bisphosphate aldolase family. The cofactor is Zn(2+).

The catalysed reaction is beta-D-fructose 1,6-bisphosphate = D-glyceraldehyde 3-phosphate + dihydroxyacetone phosphate. It functions in the pathway carbohydrate degradation; glycolysis; D-glyceraldehyde 3-phosphate and glycerone phosphate from D-glucose: step 4/4. Its function is as follows. Catalyzes the aldol condensation of dihydroxyacetone phosphate (DHAP or glycerone-phosphate) with glyceraldehyde 3-phosphate (G3P) to form fructose 1,6-bisphosphate (FBP) in gluconeogenesis and the reverse reaction in glycolysis. The chain is Fructose-bisphosphate aldolase (fba) from Corynebacterium glutamicum (strain ATCC 13032 / DSM 20300 / JCM 1318 / BCRC 11384 / CCUG 27702 / LMG 3730 / NBRC 12168 / NCIMB 10025 / NRRL B-2784 / 534).